We begin with the raw amino-acid sequence, 458 residues long: RuvB-like helicase 1 (458 aa).

Over residues 1–18 (MVQITEVKENQSSRESRT) the composition is skewed to basic and acidic residues. A disordered region spans residues 1–20 (MVQITEVKENQSSRESRTAA). 73–80 (GPPATGKT) is an ATP binding site.

The protein belongs to the RuvB family. As to quaternary structure, may form heterododecamers with RVB2. Component of the SWR1 chromatin remodeling complex, the INO80 chromatin remodeling complex, and of the R2TP complex.

The protein resides in the nucleus. The catalysed reaction is ATP + H2O = ADP + phosphate + H(+). DNA helicase which participates in several chromatin remodeling complexes, including the SWR1 and the INO80 complexes. The SWR1 complex mediates the ATP-dependent exchange of histone H2A for the H2A variant HZT1 leading to transcriptional regulation of selected genes by chromatin remodeling. The INO80 complex remodels chromatin by shifting nucleosomes and is involved in DNA repair. Also involved in pre-rRNA processing. The chain is RuvB-like helicase 1 (RVB1) from Candida albicans (strain SC5314 / ATCC MYA-2876) (Yeast).